Here is a 441-residue protein sequence, read N- to C-terminus: Amino-acid acetyltransferase (441 aa).

The 140-residue stretch at 295 to 434 (EKVRGAGIDD…KALYNFQRRS (140 aa)) folds into the N-acetyltransferase domain.

Belongs to the acetyltransferase family. ArgA subfamily.

Its subcellular location is the cytoplasm. It catalyses the reaction L-glutamate + acetyl-CoA = N-acetyl-L-glutamate + CoA + H(+). It functions in the pathway amino-acid biosynthesis; L-arginine biosynthesis; N(2)-acetyl-L-ornithine from L-glutamate: step 1/4. The protein is Amino-acid acetyltransferase of Photobacterium profundum (strain SS9).